The primary structure comprises 368 residues: tRNA-specific 2-thiouridylase MnmA (368 aa).

ATP-binding positions include 11-18 (GMSGGVDS) and Met-37. Residues 97–99 (NPD) are interaction with target base in tRNA. Cys-102 acts as the Nucleophile in catalysis. Cys-102 and Cys-199 are joined by a disulfide. Gly-127 provides a ligand contact to ATP. Residues 149 to 151 (KDQ) are interaction with tRNA. Residue Cys-199 is the Cysteine persulfide intermediate of the active site. The interval 311–312 (RY) is interaction with tRNA.

This sequence belongs to the MnmA/TRMU family. In terms of assembly, interacts with TusE.

It is found in the cytoplasm. The catalysed reaction is S-sulfanyl-L-cysteinyl-[protein] + uridine(34) in tRNA + AH2 + ATP = 2-thiouridine(34) in tRNA + L-cysteinyl-[protein] + A + AMP + diphosphate + H(+). Functionally, catalyzes the 2-thiolation of uridine at the wobble position (U34) of tRNA(Lys), tRNA(Glu) and tRNA(Gln), leading to the formation of s(2)U34, the first step of tRNA-mnm(5)s(2)U34 synthesis. Sulfur is provided by IscS, via a sulfur-relay system. Binds ATP and its substrate tRNAs. This chain is tRNA-specific 2-thiouridylase MnmA, found in Shigella boydii serotype 18 (strain CDC 3083-94 / BS512).